We begin with the raw amino-acid sequence, 319 residues long: 7-methylguanosine phosphate-specific 5'-nucleotidase (319 aa).

Aspartate 55 acts as the Nucleophile in catalysis. 2 residues coordinate Mg(2+): aspartate 55 and aspartate 57. The active-site Proton donor is aspartate 57. Residue glutamate 103 coordinates CMP. N(7)-methyl-GMP contacts are provided by glutamate 103 and serine 124. Position 171–172 (171–172 (SA)) interacts with substrate. Aspartate 245 lines the Mg(2+) pocket.

It belongs to the pyrimidine 5'-nucleotidase family. In terms of assembly, monomer. Mg(2+) serves as cofactor.

The enzyme catalyses N(7)-methyl-GMP + H2O = N(7)-methylguanosine + phosphate. The catalysed reaction is CMP + H2O = cytidine + phosphate. It carries out the reaction a ribonucleoside 5'-phosphate + H2O = a ribonucleoside + phosphate. With respect to regulation, inhibited by high levels of AMP. In terms of biological role, specifically hydrolyzes 7-methylguanosine monophosphate (m(7)GMP) to 7-methylguanosine and inorganic phosphate. Also able to mediate hydrolysis of diphosphate (m(7)GDP) to 7-methylguanosine and 2 inorganic phosphate with lower activity. The specific activity for m(7)GMP may protect cells against undesired salvage of m(7)GMP and its incorporation into nucleic acids. Also has weak activity for CMP. UMP and purine nucleotides are poor substrates. The chain is 7-methylguanosine phosphate-specific 5'-nucleotidase from Drosophila melanogaster (Fruit fly).